The sequence spans 267 residues: Putative ankyrin repeat protein RF_1099 (267 aa).

ANK repeat units lie at residues 46–75 (DPIT…GVNQ), 78–107 (LGWV…SMSL), 136–165 (DGIT…NPNV), and 170–199 (TGMT…DPNI). The stretch at 238 to 265 (KQKIIKERNSIKTRNKEKEKEIKKLFNS) forms a coiled coil.

The polypeptide is Putative ankyrin repeat protein RF_1099 (Rickettsia felis (strain ATCC VR-1525 / URRWXCal2) (Rickettsia azadi)).